A 467-amino-acid chain; its full sequence is Probable receptor-like protein kinase At3g17420 (467 aa).

A signal peptide spans Met-1–Val-35. Topologically, residues Leu-36 to Ala-123 are extracellular. Asn-50 carries an N-linked (GlcNAc...) asparagine glycan. Ser-70 is subject to Phosphoserine. Asn-79 is a glycosylation site (N-linked (GlcNAc...) asparagine). The disordered stretch occupies residues Gly-102 to Pro-126. The helical transmembrane segment at Pro-124–Leu-144 threads the bilayer. The Cytoplasmic segment spans residues Arg-145–Ile-467. The Protein kinase domain maps to Phe-154–Met-433. ATP-binding positions include Ile-160–Val-168 and Lys-182. The residue at position 227 (Tyr-227) is a Phosphotyrosine. Residue Asp-280 is the Proton acceptor of the active site. Ser-284 and Ser-313 each carry phosphoserine. A phosphothreonine mark is found at Thr-314 and Thr-319. Residue Tyr-327 is modified to Phosphotyrosine. Positions Asp-413–Ile-467 are disordered. Over residues Glu-447–Ile-467 the composition is skewed to basic and acidic residues.

The protein belongs to the protein kinase superfamily. Ser/Thr protein kinase family.

It localises to the cell membrane. The catalysed reaction is L-seryl-[protein] + ATP = O-phospho-L-seryl-[protein] + ADP + H(+). It catalyses the reaction L-threonyl-[protein] + ATP = O-phospho-L-threonyl-[protein] + ADP + H(+). The protein is Probable receptor-like protein kinase At3g17420 of Arabidopsis thaliana (Mouse-ear cress).